A 290-amino-acid polypeptide reads, in one-letter code: N-acetylmannosamine kinase (290 aa).

ATP is bound by residues 5–12 and 132–139; these read AIDIGGTK and GVGGGVVS. His-156, Cys-166, Cys-168, and Cys-173 together coordinate Zn(2+).

It belongs to the ROK (NagC/XylR) family. NanK subfamily. In terms of assembly, homodimer.

It catalyses the reaction an N-acyl-D-mannosamine + ATP = an N-acyl-D-mannosamine 6-phosphate + ADP + H(+). It functions in the pathway amino-sugar metabolism; N-acetylneuraminate degradation; D-fructose 6-phosphate from N-acetylneuraminate: step 2/5. Catalyzes the phosphorylation of N-acetylmannosamine (ManNAc) to ManNAc-6-P. The polypeptide is N-acetylmannosamine kinase (Citrobacter koseri (strain ATCC BAA-895 / CDC 4225-83 / SGSC4696)).